The sequence spans 556 residues: Arginine--tRNA ligase (556 aa).

Residues Ala-132–His-142 carry the 'HIGH' region motif.

The protein belongs to the class-I aminoacyl-tRNA synthetase family. As to quaternary structure, monomer.

Its subcellular location is the cytoplasm. The catalysed reaction is tRNA(Arg) + L-arginine + ATP = L-arginyl-tRNA(Arg) + AMP + diphosphate. This Bacillus velezensis (strain DSM 23117 / BGSC 10A6 / LMG 26770 / FZB42) (Bacillus amyloliquefaciens subsp. plantarum) protein is Arginine--tRNA ligase.